The following is a 275-amino-acid chain: Energy-coupling factor transporter ATP-binding protein EcfA1 (275 aa).

The 236-residue stretch at 5 to 240 folds into the ABC transporter domain; the sequence is IDVKNLSFRY…NDLDQIGLDD (236 aa). 40–47 is an ATP binding site; that stretch reads GHNGSGKS.

It belongs to the ABC transporter superfamily. Energy-coupling factor EcfA family. As to quaternary structure, forms a stable energy-coupling factor (ECF) transporter complex composed of 2 membrane-embedded substrate-binding proteins (S component), 2 ATP-binding proteins (A component) and 2 transmembrane proteins (T component).

Its subcellular location is the cell membrane. Its function is as follows. ATP-binding (A) component of a common energy-coupling factor (ECF) ABC-transporter complex. Unlike classic ABC transporters this ECF transporter provides the energy necessary to transport a number of different substrates. The protein is Energy-coupling factor transporter ATP-binding protein EcfA1 of Streptococcus pneumoniae serotype 4 (strain ATCC BAA-334 / TIGR4).